A 118-amino-acid chain; its full sequence is Putative pterin-4-alpha-carbinolamine dehydratase (118 aa).

This sequence belongs to the pterin-4-alpha-carbinolamine dehydratase family.

The enzyme catalyses (4aS,6R)-4a-hydroxy-L-erythro-5,6,7,8-tetrahydrobiopterin = (6R)-L-erythro-6,7-dihydrobiopterin + H2O. The chain is Putative pterin-4-alpha-carbinolamine dehydratase (phhB) from Xanthomonas axonopodis pv. citri (strain 306).